Here is a 193-residue protein sequence, read N- to C-terminus: Ion-translocating oxidoreductase complex subunit A (193 aa).

6 consecutive transmembrane segments (helical) span residues 5–25, 39–59, 72–92, 102–122, 134–154, and 171–191; these read LLLLVGTVLVNNFVLVQFLGL, IGMSFATVFVMTLASLLSYLV, LTTMSFILVIAVVVQFTEMVV, LLGIFLPLITTNCAVLGVALL, IIYGFGAALGFSLVLIMFSAM, and AIAMITAGLMSLAFLGFTGLV.

It belongs to the NqrDE/RnfAE family. The complex is composed of six subunits: RnfA, RnfB, RnfC, RnfD, RnfE and RnfG.

Its subcellular location is the cell inner membrane. Functionally, part of a membrane-bound complex that couples electron transfer with translocation of ions across the membrane. This chain is Ion-translocating oxidoreductase complex subunit A, found in Colwellia psychrerythraea (strain 34H / ATCC BAA-681) (Vibrio psychroerythus).